The chain runs to 301 residues: Bifunctional protein FolD (301 aa).

Residues 164 to 166 (GRS), S191, and I232 contribute to the NADP(+) site.

It belongs to the tetrahydrofolate dehydrogenase/cyclohydrolase family. In terms of assembly, homodimer.

The catalysed reaction is (6R)-5,10-methylene-5,6,7,8-tetrahydrofolate + NADP(+) = (6R)-5,10-methenyltetrahydrofolate + NADPH. It catalyses the reaction (6R)-5,10-methenyltetrahydrofolate + H2O = (6R)-10-formyltetrahydrofolate + H(+). It participates in one-carbon metabolism; tetrahydrofolate interconversion. In terms of biological role, catalyzes the oxidation of 5,10-methylenetetrahydrofolate to 5,10-methenyltetrahydrofolate and then the hydrolysis of 5,10-methenyltetrahydrofolate to 10-formyltetrahydrofolate. This Borrelia garinii subsp. bavariensis (strain ATCC BAA-2496 / DSM 23469 / PBi) (Borreliella bavariensis) protein is Bifunctional protein FolD.